A 344-amino-acid chain; its full sequence is Krueppel-like factor 3 (344 aa).

The segment at 1–74 (MLMFDPVPVK…TVNKRGSPPA (74 aa)) is repressor domain. K10 is covalently cross-linked (Glycyl lysine isopeptide (Lys-Gly) (interchain with G-Cter in SUMO)). The 9aaTAD; inactive signature appears at 60 to 68 (EPVDLTVNK). A CTBP-binding motif motif is present at residues 61–65 (PVDLT). A disordered region spans residues 66 to 111 (VNKRGSPPAAGGSPSSLKFPSHRRASPGLSMPSSSPPIKKYSPPSP). K68 participates in a covalent cross-link: Glycyl lysine isopeptide (Lys-Gly) (interchain with G-Cter in SUMO2). Composition is skewed to low complexity over residues 70–81 (GSPPAAGGSPSS) and 91–107 (SPGL…KKYS). Phosphoserine is present on residues S71, S91, S100, S107, and S110. Residue K195 forms a Glycyl lysine isopeptide (Lys-Gly) (interchain with G-Cter in SUMO2) linkage. K197 is covalently cross-linked (Glycyl lysine isopeptide (Lys-Gly) (interchain with G-Cter in SUMO); alternate). A Glycyl lysine isopeptide (Lys-Gly) (interchain with G-Cter in SUMO2); alternate cross-link involves residue K197. Phosphoserine is present on residues S215, S223, and S249. Positions 235-254 (SVIVQPGKRPLPVESPDTQR) are disordered. 3 consecutive C2H2-type zinc fingers follow at residues 259-283 (HRCD…RRTH), 289-313 (YKCT…FRKH), and 319-341 (FQCP…RKRH).

The protein belongs to the krueppel C2H2-type zinc-finger protein family. Monomer. Post-translationally, sumoylated with SUMO1. Sumoylation is enhanced by PIAS1, PIAS2alpha and PIAS2beta, and PIAS4, but not by Pc2. Enhances transcriptional repression, but has no effect on DNA binding. Sumoylation on Lys-197 is the major site. In 8.5 day embryos, expressed in midbrain, anterior hindbrain and ventral forebrain. In 9 day embryos, expressed throughout ventral anterior half of embryo including midbrain-hindbrain junction, ventral midbrain, diencephalon and forebrain. At 10.5 days, distribution is more widespread with expression also found in developing limb buds. Widely expressed in the adult.

The protein localises to the nucleus. Its function is as follows. Binds to the CACCC box of erythroid cell-expressed genes. May play a role in hematopoiesis. The protein is Krueppel-like factor 3 (Klf3) of Mus musculus (Mouse).